The sequence spans 380 residues: Histone deacetylase-like amidohydrolase (380 aa).

Catalysis depends on His-144, which acts as the Proton donor/acceptor. 3 residues coordinate Zn(2+): Asp-181, His-183, and Asp-269.

The protein belongs to the histone deacetylase family. Homotetramer; dimer of head-to-head dimers. Zn(2+) serves as cofactor.

With respect to regulation, is inhibited by azobenzenes, stilbenes and arylazopyrazoles. Functionally, probable protein deacetylase that catalyzes deacetylation of acetylated lysine residues. In vitro, exhibits high activity against artificial HDAC (histone deacetylase) substrates containing acetylated and trifluoroacetylated lysine residues. Is not able to deacetylate acetylated polyamines. This Pseudomonas aeruginosa (strain ATCC 15692 / DSM 22644 / CIP 104116 / JCM 14847 / LMG 12228 / 1C / PRS 101 / PAO1) protein is Histone deacetylase-like amidohydrolase.